Here is a 371-residue protein sequence, read N- to C-terminus: 3-isopropylmalate dehydrogenase (371 aa).

Substrate contacts are provided by Arg-104, Arg-114, Arg-142, and Asp-232. Asp-232, Asp-256, and Asp-260 together coordinate Mg(2+). 290–302 (GSAPDIAGQDKAN) provides a ligand contact to NAD(+).

This sequence belongs to the isocitrate and isopropylmalate dehydrogenases family. LeuB type 1 subfamily. Homodimer. Requires Mg(2+) as cofactor. Mn(2+) is required as a cofactor.

It is found in the cytoplasm. It catalyses the reaction (2R,3S)-3-isopropylmalate + NAD(+) = 4-methyl-2-oxopentanoate + CO2 + NADH. It participates in amino-acid biosynthesis; L-leucine biosynthesis; L-leucine from 3-methyl-2-oxobutanoate: step 3/4. Catalyzes the oxidation of 3-carboxy-2-hydroxy-4-methylpentanoate (3-isopropylmalate) to 3-carboxy-4-methyl-2-oxopentanoate. The product decarboxylates to 4-methyl-2 oxopentanoate. This chain is 3-isopropylmalate dehydrogenase, found in Synechococcus sp. (strain JA-2-3B'a(2-13)) (Cyanobacteria bacterium Yellowstone B-Prime).